Reading from the N-terminus, the 28-residue chain is Ranatuerin-2SEb (28 aa).

A disulfide bridge links Cys23 with Cys28.

Expressed by the skin glands.

It localises to the secreted. In terms of biological role, mast cell degranulating peptide. Causes histamine release from rat peritoneal mast cells in vitro. Has antibacterial activity against the Gram-negative bacterium E.coli K12 and Gram-positive bacterium M.luteus NCT C2665. This chain is Ranatuerin-2SEb, found in Lithobates sevosus (Dusky gopher frog).